Reading from the N-terminus, the 697-residue chain is Exocyst complex component 7 (697 aa).

The interval 1–384 (MIPPQEASAR…FSTVLTVFPI (384 aa)) is SEC8 and ARHQ binding. Coiled coils occupy residues 5–42 (QEAS…TRNM) and 63–85 (VHKQ…SCLD). Serine 133 carries the post-translational modification Phosphoserine. A disordered region spans residues 238–270 (FRKSSSSSGVPYSPAIPNKRKDTPTKKPIKRPG).

This sequence belongs to the EXO70 family. As to quaternary structure, the exocyst complex is composed of EXOC1, EXOC2, EXOC3, EXOC4, EXOC5, EXOC6, EXOC7 and EXOC8. Interacts with RAB11FIP3. Interacts with ARHQ in a GTP-dependent manner.

Its subcellular location is the cytoplasm. The protein resides in the cytosol. It is found in the cell membrane. The protein localises to the midbody. It localises to the midbody ring. Component of the exocyst complex involved in the docking of exocytic vesicles with fusion sites on the plasma membrane. In adipocytes, plays a crucial role in targeting SLC2A4 vesicle to the plasma membrane in response to insulin, perhaps directing the vesicle to the precise site of fusion. It is required for neuron survival and plays an essential role in cortical development. This is Exocyst complex component 7 (Exoc7) from Mus musculus (Mouse).